The chain runs to 262 residues: Small ribosomal subunit protein eS1y (262 aa).

Residues 1-18 (MAVGKNKRISKGRKGGKK) are compositionally biased toward basic residues. The interval 1–21 (MAVGKNKRISKGRKGGKKKAV) is disordered.

It belongs to the eukaryotic ribosomal protein eS1 family. In terms of assembly, component of the small ribosomal subunit. Mature ribosomes consist of a small (40S) and a large (60S) subunit. The 40S subunit contains about 33 different proteins and 1 molecule of RNA (18S). The 60S subunit contains about 49 different proteins and 3 molecules of RNA (25S, 5.8S and 5S).

It is found in the cytoplasm. This is Small ribosomal subunit protein eS1y from Arabidopsis thaliana (Mouse-ear cress).